The chain runs to 600 residues: Isocitrate dehydrogenase kinase/phosphatase (600 aa).

Residues 335–341 (APGIRGM) and K356 each bind ATP. Residue D390 is part of the active site.

It belongs to the AceK family.

The protein localises to the cytoplasm. The catalysed reaction is L-seryl-[isocitrate dehydrogenase] + ATP = O-phospho-L-seryl-[isocitrate dehydrogenase] + ADP + H(+). Bifunctional enzyme which can phosphorylate or dephosphorylate isocitrate dehydrogenase (IDH) on a specific serine residue. This is a regulatory mechanism which enables bacteria to bypass the Krebs cycle via the glyoxylate shunt in response to the source of carbon. When bacteria are grown on glucose, IDH is fully active and unphosphorylated, but when grown on acetate or ethanol, the activity of IDH declines drastically concomitant with its phosphorylation. This is Isocitrate dehydrogenase kinase/phosphatase from Bordetella parapertussis (strain 12822 / ATCC BAA-587 / NCTC 13253).